Reading from the N-terminus, the 341-residue chain is GDT1-like protein 1, chloroplastic (341 aa).

Low complexity predominate over residues 1–13 (MASVASSTVFASS). 2 disordered regions span residues 1-41 (MASV…GRSV) and 54-76 (VVTR…GGGR). The transit peptide at 1–57 (MASVASSTVFASSLPHHRATTRAPPTPPRIPRRARLPGRSVVSCLPKRGSEKLVVTR) directs the protein to the chloroplast. Helical transmembrane passes span 79-99 (PSLD…VLML), 117-137 (VVGD…LIFF), 158-178 (AIIF…SVVL), 203-223 (FLAA…AASG), 246-266 (GAGI…VFIA), 286-306 (LGVI…AVLG), and 318-338 (IVAY…LVEI).

It belongs to the GDT1 family.

It localises to the plastid. It is found in the chloroplast membrane. The protein is GDT1-like protein 1, chloroplastic of Oryza sativa subsp. japonica (Rice).